Here is a 158-residue protein sequence, read N- to C-terminus: uncharacterized protein (158 aa).

Its subcellular location is the mitochondrion. This is an uncharacterized protein from Arabidopsis thaliana (Mouse-ear cress).